We begin with the raw amino-acid sequence, 1088 residues long: MASRGGGQHQRHQQQQQQPGGYGRGGGGGRGRGRDGAPYSGGRGRGQDGSYPGGRGGGYGGGGGGGGPPYYGGGGGGGGGGGGQGRGYYDDGGDGRGYQRGMEGGGGRGGYRGDGDGGYGRGGGGYHGDGERGYGRGGGGGGGGGGGYRGDDEGRSSYGRARGGGGGGGGYHGDGEAGYGRGRGGRDYDGGRGGGGRRGGRGGGGSSYHQQPPPDLPQAPEPRLAAQYAREIDIAALRAQFKGLTTTTPGAASSQFPARPGFGAAGEECLVKVNHFFVGLKNDNFHHYDVAIAPDPVLKGLFRTIISKLVTERRHTDFGGRLPVYDGRANLYTAGELPFRSRELEVELSGSRKFKVAIRHVAPVSLQDLRMVMAGCPAGIPSQALQLLDIVLRDMVLAERNDMGYVAFGRSYFSPGLGSRELDKGIFAWKGFYQSCRVTQQGLSLNIDMSSTAFIEPGRVLNFVEKAIGRRITNAITVGYFLNNYGNELMRTLKGVKVEVTHRGNLRKKYRIAGFTEQSADVQTFTSSDGIKTVKEYFNKKYNLKLAFGYLPCLQVGSKERPNYLPMELCNIVPGQRYKNRLSPTQVSNLINITNDRPCDRESSIRQTVSSNQYNSTERADEFGIEVDSYPTTLKARVLKAPMLKYHDSGRVRVCTPEDGAWNMKDKKVVNGATIKSWACVNLCEGLDNRVVEAFCLQLVRTSKITGLDFANVSLPILKADPHNVKTDLPMRYQEACSWSRDNKIDLLLVVMTDDKNNASLYGDVKRICETEIGVLSQCCRAKQVYKERNVQYCANVALKINAKAGGRNSVFLNVEASLPVVSKSPTIIFGADVTHPGSFDESTPSIASVVASADWPEVTKYNSVVRMQASRKEIIQDLDSIVRELLNAFKRDSKMEPKQLIFYRDGVSEGQFQQVVESEIPEIEKAWKSLYAGKPRITFIVVQKRHHTRLFPNNYNDPRGMDGTGNVRPGTVVDTVICHPREFDFFLCSQAGIKGTSRPSHYHVLRDDNNFTADQLQSVTNNLCYLYTSCTRSVSIPPPVYYAHKLAFRARFYLTQVPVAGGDPGAAKFQWVLPEIKEEVKKSMFFC.

Residues 1-220 form a disordered region; it reads MASRGGGQHQ…QPPPDLPQAP (220 aa). Gly residues-rich tracts occupy residues 20–30, 51–86, 95–127, 135–148, 161–182, and 191–206; these read GGYGRGGGGGR, YPGGRGGGYGGGGGGGGPPYYGGGGGGGGGGGGQGR, GRGYQRGMEGGGGRGGYRGDGDGGYGRGGGGYH, GRGGGGGGGGGGGY, ARGGGGGGGGYHGDGEAGYGRG, and GRGGGGRRGGRGGGGS. A compositionally biased stretch (pro residues) spans 211-220; sequence QPPPDLPQAP. Residues 477–574 form the PAZ domain; it reads TVGYFLNNYG…LPMELCNIVP (98 aa). Positions 747–1056 constitute a Piwi domain; it reads LLLVVMTDDK…LAFRARFYLT (310 aa).

Belongs to the argonaute family. Ago subfamily.

Functionally, probably involved in the RNA silencing pathway. May bind to short RNAs such as microRNAs (miRNAs) or short interfering RNAs (siRNAs), and represses the translation of mRNAs which are complementary to them. The chain is Protein argonaute 18 (AGO18) from Oryza sativa subsp. japonica (Rice).